Consider the following 202-residue polypeptide: MARYRGPRLRITRRLGDLPGLTRKAAKRSYPPGQHGQARRKRSEYAIRLEEKQKLRFNYGVSERQLVRYVKKARAQEGSTGTNLLKLLENRLDNVCFRLGFGPTVPGARQLVNHGHVTVNGRVTDIASYQCKPGDVVAIRERKCSKQLAEGNLEFPGLANVPTHLELDKAKLSAKVTGRCEREWVALEINELLVVEYYSRKV.

Positions 15-42 (LGDLPGLTRKAAKRSYPPGQHGQARRKR) are disordered. Residues 90–152 (NRLDNVCFRL…KCSKQLAEGN (63 aa)) form the S4 RNA-binding domain.

This sequence belongs to the universal ribosomal protein uS4 family. Part of the 30S ribosomal subunit. Contacts protein S5. The interaction surface between S4 and S5 is involved in control of translational fidelity.

In terms of biological role, one of the primary rRNA binding proteins, it binds directly to 16S rRNA where it nucleates assembly of the body of the 30S subunit. With S5 and S12 plays an important role in translational accuracy. The chain is Small ribosomal subunit protein uS4 from Parasynechococcus marenigrum (strain WH8102).